The sequence spans 282 residues: V-set domain-containing T-cell activation inhibitor 1 (282 aa).

Positions methionine 1–alanine 24 are cleaved as a signal peptide. Over leucine 25–serine 259 the chain is Extracellular. Ig-like V-type domains lie at histidine 35–lysine 146 and proline 153–threonine 241. Intrachain disulfides connect cysteine 56–cysteine 130 and cysteine 168–cysteine 225. N-linked (GlcNAc...) asparagine glycosylation occurs at asparagine 216. The helical transmembrane segment at leucine 260–methionine 280 threads the bilayer. The Cytoplasmic segment spans residues leucine 281–lysine 282.

Belongs to the immunoglobulin superfamily. BTN/MOG family. Post-translationally, N-glycosylated. Overexpressed in breast, ovarian, endometrial, renal cell (RCC) and non-small-cell lung cancers (NSCLC). Expressed on activated T- and B-cells, monocytes and dendritic cells, but not expressed in most normal tissues (at protein level). Widely expressed, including in kidney, liver, lung, ovary, placenta, spleen and testis.

The protein resides in the cell membrane. Functionally, negatively regulates T-cell-mediated immune response by inhibiting T-cell activation, proliferation, cytokine production and development of cytotoxicity. When expressed on the cell surface of tumor macrophages, plays an important role, together with regulatory T-cells (Treg), in the suppression of tumor-associated antigen-specific T-cell immunity. Involved in promoting epithelial cell transformation. This Homo sapiens (Human) protein is V-set domain-containing T-cell activation inhibitor 1.